The primary structure comprises 207 residues: Ribosomal RNA small subunit methyltransferase G (207 aa).

S-adenosyl-L-methionine contacts are provided by residues Gly73, Leu78, 124–125, and Arg139; that span reads VE.

The protein belongs to the methyltransferase superfamily. RNA methyltransferase RsmG family.

It localises to the cytoplasm. It carries out the reaction guanosine(527) in 16S rRNA + S-adenosyl-L-methionine = N(7)-methylguanosine(527) in 16S rRNA + S-adenosyl-L-homocysteine. Its function is as follows. Specifically methylates the N7 position of guanine in position 527 of 16S rRNA. In Klebsiella pneumoniae (strain 342), this protein is Ribosomal RNA small subunit methyltransferase G.